The primary structure comprises 765 residues: Transcription factor SKN7 (765 aa).

Positions 1–42 (MPPTNGEGGSQQPQQQQQQQQQQQQQQQQQQQQQQGGSGSSD) are disordered. A compositionally biased stretch (low complexity) spans 11–35 (QQPQQQQQQQQQQQQQQQQQQQQQQ). The tract at residues 40 to 145 (SSDFVRKLYK…NLDNIRRKAP (106 aa)) is DNA-binding domain. The stretch at 157–198 (FNASQQQIAALSESLQATQQQLQALQQQCYELEKTNRLLVSE) forms a coiled coil. A hydrophobic repeat HR-A/B region spans residues 160–220 (SQQQIAALSE…QASNEIINHL (61 aa)). Residues 371-391 (SSSQITPSQITPPPKDQMSSM) form a disordered region. The Response regulatory domain maps to 398-514 (RVLLVEDDKT…NMSRLLRRHL (117 aa)). Residue Asp-449 is modified to 4-aspartylphosphate. The tract at residues 542 to 765 (TAGPATTGVG…PGVGVAGFVQ (224 aa)) is transactivation domain. The segment covering 550-564 (VGVGVAGAPSGGAHG) has biased composition (gly residues). 2 disordered regions span residues 550–647 (VGVG…PAGL) and 686–765 (PGAM…GFVQ). Residues 569 to 584 (AQHQQGYAMAPPTTMQ) show a composition bias toward low complexity. Over residues 626–636 (QPPPPPTPTQP) the composition is skewed to pro residues. 2 stretches are compositionally biased toward low complexity: residues 637–647 (SPTSAAPPAGL) and 699–715 (GVGHPAPSGAGSAAGAR). Gly residues predominate over residues 755 to 765 (HPGVGVAGFVQ).

It belongs to the SKN7 family. In terms of assembly, homotrimer.

It is found in the nucleus. Functionally, transcription factor that is part of a SLN1-YPD1-SKN7 two-component regulatory system, which controls gene expression in response to changes in the osmolarity of the extracellular environment. Under low osmotic conditions, phosphorylated and activated by the phosphorelay intermediate protein YPD1. Also activated in response to oxidative stress, independent on the two-component regulatory system. Regulates heat shock genes in response to oxidative stress and genes involved in cell wall integrity in response to osmotic changes. The sequence is that of Transcription factor SKN7 from Chaetomium thermophilum (strain DSM 1495 / CBS 144.50 / IMI 039719) (Thermochaetoides thermophila).